A 294-amino-acid chain; its full sequence is Nucleotide-binding protein CA_C0511 (294 aa).

8 to 15 (GLSGAGKT) is an ATP binding site. 59-62 (DIRG) is a GTP binding site.

The protein belongs to the RapZ-like family.

Displays ATPase and GTPase activities. The polypeptide is Nucleotide-binding protein CA_C0511 (Clostridium acetobutylicum (strain ATCC 824 / DSM 792 / JCM 1419 / IAM 19013 / LMG 5710 / NBRC 13948 / NRRL B-527 / VKM B-1787 / 2291 / W)).